Consider the following 216-residue polypeptide: UPF0301 protein Nham_3550 (216 aa).

Residues 1–10 (MSAARKRPGT) are compositionally biased toward basic residues. The segment at 1–25 (MSAARKRPGTGRRQTDDADTGAPDQ) is disordered.

Belongs to the UPF0301 (AlgH) family.

In Nitrobacter hamburgensis (strain DSM 10229 / NCIMB 13809 / X14), this protein is UPF0301 protein Nham_3550.